The sequence spans 222 residues: Ribonuclease T (222 aa).

Residues 20–194 (VVIDVETAGF…YDTERTAELF (175 aa)) enclose the Exonuclease domain. Mg(2+)-binding residues include D23, E25, H181, and D186. Residue H181 is the Proton donor/acceptor of the active site.

It belongs to the RNase T family. Homodimer. The cofactor is Mg(2+).

Trims short 3' overhangs of a variety of RNA species, leaving a one or two nucleotide 3' overhang. Responsible for the end-turnover of tRNA: specifically removes the terminal AMP residue from uncharged tRNA (tRNA-C-C-A). Also appears to be involved in tRNA biosynthesis. This Shewanella sp. (strain MR-4) protein is Ribonuclease T.